The sequence spans 352 residues: Biotin synthase (352 aa).

In terms of domain architecture, Radical SAM core spans 41–268 (NEVQVSTLLS…ASHVRLSAGR (228 aa)). [4Fe-4S] cluster is bound by residues Cys-56, Cys-60, and Cys-63. 4 residues coordinate [2Fe-2S] cluster: Cys-100, Cys-131, Cys-191, and Arg-263.

It belongs to the radical SAM superfamily. Biotin synthase family. Homodimer. It depends on [4Fe-4S] cluster as a cofactor. [2Fe-2S] cluster is required as a cofactor.

It carries out the reaction (4R,5S)-dethiobiotin + (sulfur carrier)-SH + 2 reduced [2Fe-2S]-[ferredoxin] + 2 S-adenosyl-L-methionine = (sulfur carrier)-H + biotin + 2 5'-deoxyadenosine + 2 L-methionine + 2 oxidized [2Fe-2S]-[ferredoxin]. Its pathway is cofactor biosynthesis; biotin biosynthesis; biotin from 7,8-diaminononanoate: step 2/2. Catalyzes the conversion of dethiobiotin (DTB) to biotin by the insertion of a sulfur atom into dethiobiotin via a radical-based mechanism. The chain is Biotin synthase from Marinobacter nauticus (strain ATCC 700491 / DSM 11845 / VT8) (Marinobacter aquaeolei).